Consider the following 905-residue polypeptide: NADH-quinone oxidoreductase subunit G (905 aa).

The 83-residue stretch at Met1–Glu83 folds into the 2Fe-2S ferredoxin-type domain. [2Fe-2S] cluster is bound by residues Cys34, Cys45, Cys48, and Cys67. Positions Glu83–Gly122 constitute a 4Fe-4S His(Cys)3-ligated-type domain. Residues His99, Cys103, Cys106, Cys112, Cys151, Cys154, Cys157, Cys201, Cys228, Cys231, Cys235, and Cys263 each coordinate [4Fe-4S] cluster. In terms of domain architecture, 4Fe-4S Mo/W bis-MGD-type spans Met221–Asp277.

This sequence belongs to the complex I 75 kDa subunit family. Composed of 13 different subunits. Subunits NuoCD, E, F, and G constitute the peripheral sector of the complex. Requires [2Fe-2S] cluster as cofactor. The cofactor is [4Fe-4S] cluster.

It catalyses the reaction a quinone + NADH + 5 H(+)(in) = a quinol + NAD(+) + 4 H(+)(out). In terms of biological role, NDH-1 shuttles electrons from NADH, via FMN and iron-sulfur (Fe-S) centers, to quinones in the respiratory chain. The immediate electron acceptor for the enzyme in this species is believed to be ubiquinone. Couples the redox reaction to proton translocation (for every two electrons transferred, four hydrogen ions are translocated across the cytoplasmic membrane), and thus conserves the redox energy in a proton gradient. In Pseudomonas aeruginosa (strain ATCC 15692 / DSM 22644 / CIP 104116 / JCM 14847 / LMG 12228 / 1C / PRS 101 / PAO1), this protein is NADH-quinone oxidoreductase subunit G (nuoG).